Consider the following 127-residue polypeptide: MMIRGIRGATTVERDTEEEILQKTKQLLEKIIEENHTKPEDVVQMLLSATPDLHAVFPAKAVRELSGWQYVPVTCMQEMDVTGGLKKCIRVMMTVQTDVPQDQIRHVYLEKVVVLRPDLSLTKNTEL.

Residues isoleucine 3–leucine 121 form the Chorismate mutase aroH-type domain. Prephenate contacts are provided by residues arginine 7, threonine 74–glutamate 78, arginine 90, and tyrosine 108.

In terms of assembly, homotrimer.

It localises to the cytoplasm. The enzyme catalyses chorismate = prephenate. Its pathway is metabolic intermediate biosynthesis; prephenate biosynthesis; prephenate from chorismate: step 1/1. Its function is as follows. Catalyzes the Claisen rearrangement of chorismate to prephenate. Probably involved in the aromatic amino acid biosynthesis. This is Chorismate mutase AroH from Bacillus subtilis (strain 168).